The sequence spans 185 residues: MIDETLFDAEEKMEKAVSVARDDLSSIRTGRANPGMFSRINVDYYGATTPITQLSSINVPEARMVVIKPYEANQLRNIEDAIRNSDLGVNPTNDGNIIRVSIPQLTEERRRDLVKQAKAKGEDAKVSVRNIRRKAMEELARIKKDGEAGEDEVSRAEKDLDKTTHTYTHQIDELVKHKEGELLEV.

Residues 145 to 164 (DGEAGEDEVSRAEKDLDKTT) are disordered.

This sequence belongs to the RRF family.

It is found in the cytoplasm. Its function is as follows. Responsible for the release of ribosomes from messenger RNA at the termination of protein biosynthesis. May increase the efficiency of translation by recycling ribosomes from one round of translation to another. The polypeptide is Ribosome-recycling factor (Mycobacterium sp. (strain JLS)).